A 344-amino-acid polypeptide reads, in one-letter code: Estradiol 17-beta-dehydrogenase 1 (344 aa).

Residue 3–32 (STVVLITGCSSGIGLHLAVRLASDRSQSFK) participates in NAD(+) binding. Position 143 (Ser-143) interacts with substrate. The active-site Proton acceptor is Tyr-156.

It belongs to the short-chain dehydrogenases/reductases (SDR) family. As to quaternary structure, homodimer.

The protein resides in the cytoplasm. It catalyses the reaction 17beta-estradiol + NAD(+) = estrone + NADH + H(+). The catalysed reaction is 17beta-estradiol + NADP(+) = estrone + NADPH + H(+). Its pathway is steroid biosynthesis; estrogen biosynthesis. Its function is as follows. Favors the reduction of estrogens and androgens. Uses preferentially NADH. The sequence is that of Estradiol 17-beta-dehydrogenase 1 (Hsd17b1) from Rattus norvegicus (Rat).